Reading from the N-terminus, the 403-residue chain is Zinc finger CCHC domain-containing protein 3 (403 aa).

Positions 1–158 (MATGGGAEEE…PLQDEPAAAA (158 aa)) are disordered. 2 stretches are compositionally biased toward basic and acidic residues: residues 26 to 38 (ARGE…REKM) and 47 to 65 (LAEK…REEE). Over residues 67-79 (GGGGGSAGLGGPA) the composition is skewed to gly residues. Basic and acidic residues predominate over residues 95-121 (GDPKGRRRDPAGEAVDPRKKKGAAEAG). Low complexity predominate over residues 128–139 (AAAAAMATPARP). Position 201 is a phosphotyrosine (Tyr-201). CCHC-type zinc fingers lie at residues 335–350 (CFKC…SCTQ), 352–368 (RCFR…YCRK), and 372–387 (CNLC…QCPK).

Interacts with CGAS. Interacts with RIGI. Interacts with IFIH1/MDA5.

It localises to the cytoplasm. In terms of biological role, nucleic acid-binding protein involved in innate immune response to DNA and RNA viruses. Binds DNA and RNA in the cytoplasm and acts by promoting recognition of viral nucleic acids by virus sensors, such as RIGI, IFIH1/MDA5 and CGAS. Acts as a co-sensor for recognition of double-stranded DNA (dsDNA) by cGAS in the cytoplasm, thereby playing a role in innate immune response to cytosolic dsDNA and DNA virus. Binds dsDNA and probably acts by promoting sensing of dsDNA by CGAS, leading to enhance CGAS oligomerization and activation. Promotes sensing of viral RNA by RIGI-like receptors proteins RIGI and IFIH1/MDA5 via two mechanisms: binds double-stranded RNA (dsRNA), enhancing the binding of RIGI and IFIH1/MDA5 to dsRNA and promotes 'Lys-63'-linked ubiquitination and subsequent activation of RIGI and IFIH1/MDA5. This chain is Zinc finger CCHC domain-containing protein 3, found in Homo sapiens (Human).